The sequence spans 324 residues: tRNA dimethylallyltransferase (324 aa).

17-24 serves as a coordination point for ATP; it reads GPTASGKT. 19–24 lines the substrate pocket; it reads TASGKT. 4 interaction with substrate tRNA regions span residues 42–45, 166–170, 251–256, and 284–291; these read DSAL, QRIQR, RCVGYR, and KRQITWLR.

It belongs to the IPP transferase family. Monomer. Requires Mg(2+) as cofactor.

It carries out the reaction adenosine(37) in tRNA + dimethylallyl diphosphate = N(6)-dimethylallyladenosine(37) in tRNA + diphosphate. Catalyzes the transfer of a dimethylallyl group onto the adenine at position 37 in tRNAs that read codons beginning with uridine, leading to the formation of N6-(dimethylallyl)adenosine (i(6)A). The protein is tRNA dimethylallyltransferase of Burkholderia ambifaria (strain MC40-6).